The chain runs to 66 residues: Large ribosomal subunit protein bL35 (66 aa).

This sequence belongs to the bacterial ribosomal protein bL35 family. As to quaternary structure, part of the 50S ribosomal subunit. Contacts proteins L15 and L33.

Functionally, binds the 23S rRNA. The protein is Large ribosomal subunit protein bL35 (rpmI) of Deinococcus radiodurans (strain ATCC 13939 / DSM 20539 / JCM 16871 / CCUG 27074 / LMG 4051 / NBRC 15346 / NCIMB 9279 / VKM B-1422 / R1).